We begin with the raw amino-acid sequence, 284 residues long: MEMO1 family protein SSO0066 (284 aa).

It belongs to the MEMO1 family.

This chain is MEMO1 family protein SSO0066, found in Saccharolobus solfataricus (strain ATCC 35092 / DSM 1617 / JCM 11322 / P2) (Sulfolobus solfataricus).